The primary structure comprises 570 residues: 15-cis-phytoene desaturase, chloroplastic/chromoplastic (570 aa).

The N-terminal 91 residues, 1 to 91 (MSIVGLVSVV…AQLSASFRSS (91 aa)), are a transit peptide targeting the chloroplast and chromoplast. FAD is bound by residues 104–120 (GAGLAGLSTAKYLADAG), alanine 108, 127–128 (ES), lysine 135, 152–153 (HI), and tyrosine 158. Arginine 293 contributes to the substrate binding site. An FAD-binding site is contributed by aspartate 524. Alanine 532 is a substrate binding site. Methionine 534 lines the FAD pocket.

Belongs to the carotenoid/retinoid oxidoreductase family. Homotetramer. Requires FAD as cofactor. As to expression, expressed more strongly in flowers than in leaves.

It is found in the plastid. The protein resides in the chloroplast. The protein localises to the chromoplast. Its subcellular location is the membrane. The catalysed reaction is 2 a plastoquinone + 15-cis-phytoene = 9,9',15-tri-cis-zeta-carotene + 2 a plastoquinol. The protein operates within carotenoid biosynthesis; lycopene biosynthesis. Functionally, converts phytoene into zeta-carotene via the intermediary of phytofluene by the symmetrical introduction of two double bonds at the C-11 and C-11' positions of phytoene with a concomitant isomerization of two neighboring double bonds at the C9 and C9' positions from trans to cis. This Narcissus pseudonarcissus (Daffodil) protein is 15-cis-phytoene desaturase, chloroplastic/chromoplastic (PDS1).